Here is a 189-residue protein sequence, read N- to C-terminus: Pyridoxal 5'-phosphate synthase subunit PdxT (189 aa).

47-49 lines the L-glutamine pocket; that stretch reads GES. Residue Cys79 is the Nucleophile of the active site. L-glutamine is bound by residues Arg105 and 132–133; that span reads IR. Residues His168 and Glu170 each act as charge relay system in the active site.

Belongs to the glutaminase PdxT/SNO family. In the presence of PdxS, forms a dodecamer of heterodimers. Only shows activity in the heterodimer.

The enzyme catalyses aldehydo-D-ribose 5-phosphate + D-glyceraldehyde 3-phosphate + L-glutamine = pyridoxal 5'-phosphate + L-glutamate + phosphate + 3 H2O + H(+). It carries out the reaction L-glutamine + H2O = L-glutamate + NH4(+). Its pathway is cofactor biosynthesis; pyridoxal 5'-phosphate biosynthesis. Its function is as follows. Catalyzes the hydrolysis of glutamine to glutamate and ammonia as part of the biosynthesis of pyridoxal 5'-phosphate. The resulting ammonia molecule is channeled to the active site of PdxS. This is Pyridoxal 5'-phosphate synthase subunit PdxT from Methanocorpusculum labreanum (strain ATCC 43576 / DSM 4855 / Z).